Consider the following 305-residue polypeptide: Type II secretion system protein C (305 aa).

At 1-29 (MEFKQLPPLAAWPRLLSQNTLRWQKPISE) the chain is on the cytoplasmic side. A helical membrane pass occupies residues 30–50 (GLTLLLLVASAWTLGKMVWVV). Residues 51-305 (SAEQTPVPTW…GQQHDVYIQF (255 aa)) are Periplasmic-facing.

This sequence belongs to the GSP C family.

It is found in the cell inner membrane. Functionally, involved in a type II secretion system (T2SS, formerly general secretion pathway, GSP) for the export of proteins. Required for secretion of cholera toxin through the outer membrane. The chain is Type II secretion system protein C (epsC) from Vibrio cholerae serotype O1 (strain ATCC 39315 / El Tor Inaba N16961).